The chain runs to 202 residues: N-(5'-phosphoribosyl)anthranilate isomerase (202 aa).

The protein belongs to the TrpF family.

It carries out the reaction N-(5-phospho-beta-D-ribosyl)anthranilate = 1-(2-carboxyphenylamino)-1-deoxy-D-ribulose 5-phosphate. It functions in the pathway amino-acid biosynthesis; L-tryptophan biosynthesis; L-tryptophan from chorismate: step 3/5. The chain is N-(5'-phosphoribosyl)anthranilate isomerase from Listeria monocytogenes serotype 4b (strain F2365).